A 106-amino-acid polypeptide reads, in one-letter code: Large ribosomal subunit protein bL21 (106 aa).

The protein belongs to the bacterial ribosomal protein bL21 family. As to quaternary structure, part of the 50S ribosomal subunit. Contacts protein L20.

This protein binds to 23S rRNA in the presence of protein L20. The polypeptide is Large ribosomal subunit protein bL21 (Streptomyces coelicolor (strain ATCC BAA-471 / A3(2) / M145)).